A 287-amino-acid chain; its full sequence is ATP synthase gamma chain (287 aa).

It belongs to the ATPase gamma chain family. As to quaternary structure, F-type ATPases have 2 components, CF(1) - the catalytic core - and CF(0) - the membrane proton channel. CF(1) has five subunits: alpha(3), beta(3), gamma(1), delta(1), epsilon(1). CF(0) has three main subunits: a, b and c.

Its subcellular location is the cell membrane. In terms of biological role, produces ATP from ADP in the presence of a proton gradient across the membrane. The gamma chain is believed to be important in regulating ATPase activity and the flow of protons through the CF(0) complex. The protein is ATP synthase gamma chain of Geobacillus stearothermophilus (Bacillus stearothermophilus).